Reading from the N-terminus, the 717-residue chain is DNA polymerase iota (717 aa).

Positions 1-22 are disordered; it reads MEPLHAGAAGSSRAVCSQGPPT. One can recognise a UmuC domain in the interval 30 to 243; the sequence is IVHVDLDCFY…NHIKEIPGIG (214 aa). 2 residues coordinate Mg(2+): Asp-34 and Leu-35. A 2'-deoxyribonucleoside 5'-triphosphate contacts are provided by Tyr-39 and Arg-71. Mg(2+) is bound at residue Asp-126. The active-site Proton acceptor is Glu-127. 2 DNA-binding regions span residues 300 to 307 and 343 to 360; these read QSFSEEDT and RLVI…ESRQ. The short motif at 500–517 is the Ubiquitin-binding 1 (UBM1) element; that stretch reads VDQEVFKQLPADIQEEIL. Disordered stretches follow at residues 549–589, 603–622, and 644–687; these read QMQA…SHPS, KDEQ…FSST, and HRTV…DIDP. Residues 575–589 are compositionally biased toward low complexity; the sequence is PGTSGLSPGSTSHPS. Polar residues-rich tracts occupy residues 607–622 and 652–662; these read TSQG…FSST and QTATASHQGLE. Residues 665–679 are compositionally biased toward basic and acidic residues; sequence QGLESRELDSAEEKL. The Ubiquitin-binding 2 (UBM2) motif lies at 685 to 702; that stretch reads IDPQVFYELPEEVQKELM.

Belongs to the DNA polymerase type-Y family. Interacts with POLH. Interacts with REV1. Interacts with ubiquitin. It depends on Mg(2+) as a cofactor. The cofactor is Mn(2+). Monoubiquitinated. Protein monoubiquitination prevents POLI binding to ubiquitin via the ubiquitin-binding motif 1 and ubiquitin-binding motif 2. In terms of tissue distribution, detected in testis, and at very low levels in spleen, lung and brain. Detected in round spermatids, but not in prophase spermatocytes.

The protein resides in the nucleus. The catalysed reaction is DNA(n) + a 2'-deoxyribonucleoside 5'-triphosphate = DNA(n+1) + diphosphate. Its function is as follows. Error-prone DNA polymerase specifically involved in DNA repair. Plays an important role in translesion synthesis, where the normal high-fidelity DNA polymerases cannot proceed and DNA synthesis stalls. Favors Hoogsteen base-pairing in the active site. Inserts the correct base with high-fidelity opposite an adenosine template. Exhibits low fidelity and efficiency opposite a thymidine template, where it will preferentially insert guanosine. May play a role in hypermutation of immunoglobulin genes. Forms a Schiff base with 5'-deoxyribose phosphate at abasic sites, but may not have lyase activity. The sequence is that of DNA polymerase iota (Poli) from Mus musculus (Mouse).